We begin with the raw amino-acid sequence, 312 residues long: Transcription initiation factor IIB 1 (312 aa).

The TFIIB-type zinc finger occupies 12–43 (EIERCPECGSTNLIRDYEHGELVCGECGAVIE). 4 residues coordinate Zn(2+): Cys16, Cys19, Cys35, and Cys38. Repeat copies occupy residues 129-212 (QELE…SRYL) and 223-304 (DYIS…ELTE).

It belongs to the TFIIB family.

Its function is as follows. Stabilizes TBP binding to an archaeal box-A promoter. Also responsible for recruiting RNA polymerase II to the pre-initiation complex (DNA-TBP-TFIIB). The protein is Transcription initiation factor IIB 1 of Thermoplasma volcanium (strain ATCC 51530 / DSM 4299 / JCM 9571 / NBRC 15438 / GSS1).